A 493-amino-acid chain; its full sequence is Probable cytochrome P450 313a2 (493 aa).

Cys438 lines the heme pocket.

Belongs to the cytochrome P450 family. The cofactor is heme.

It localises to the endoplasmic reticulum membrane. The protein localises to the microsome membrane. Its function is as follows. May be involved in the metabolism of insect hormones and in the breakdown of synthetic insecticides. In Drosophila melanogaster (Fruit fly), this protein is Probable cytochrome P450 313a2 (Cyp313a2).